The primary structure comprises 620 residues: Sorbicillinoid biosynthetic cluster transcription factor 1 (620 aa).

Positions 10–37 (CEECRRRKARCDRVRPQCGICADAGRTC) form a DNA-binding region, zn(2)-C6 fungal-type. The disordered stretch occupies residues 285–308 (HDDETSPNENSGSCPSVSPSTTQN). Positions 291–308 (PNENSGSCPSVSPSTTQN) are enriched in polar residues.

The protein localises to the nucleus. In terms of biological role, transcription factor that acts as the main regulator of the gene cluster that mediates the biosynthesis of sorbicillinoids, a diverse group of yellow secondary metabolites that restrict growth of competing pathogenic fungi but not of bacteria. This Penicillium rubens (strain ATCC 28089 / DSM 1075 / NRRL 1951 / Wisconsin 54-1255) (Penicillium chrysogenum) protein is Sorbicillinoid biosynthetic cluster transcription factor 1.